Consider the following 709-residue polypeptide: Nucleobase-ascorbate transporter 11 (709 aa).

Disordered regions lie at residues 1-28 and 58-167; these read MDSG…YGER and TGFV…SEDG. Residues 15–25 are compositionally biased toward gly residues; it reads KGNGSGGGNGY. Residues 65–74 show a composition bias toward polar residues; that stretch reads SGETSTSTRT. 3 stretches are compositionally biased toward basic and acidic residues: residues 75 to 89, 108 to 132, and 142 to 151; these read KFGE…KGRD, NRPE…RLNR, and EGGKINKDLE. The next 12 membrane-spanning stretches (helical) occupy residues 196–216, 222–242, 246–266, 288–308, 310–330, 336–356, 369–389, 454–474, 532–552, 555–575, 590–610, and 642–662; these read YLSL…AMDG, ASVI…HCYF, LPLV…VINS, IIVG…SLLL, FINP…FFSY, GTCV…TLYL, IYAV…LTVG, IIMI…YHSA, LVIG…GAIL, IPQA…VSLG, ITIV…FQQY, and FAMN…AFIL.

The protein belongs to the nucleobase:cation symporter-2 (NCS2) (TC 2.A.40) family. In terms of tissue distribution, expressed in leaf primordia and vasculature of pedicels, rosette leaves, sepals, carpels and siliques. Expressed in the root central cylinder.

It is found in the membrane. In Arabidopsis thaliana (Mouse-ear cress), this protein is Nucleobase-ascorbate transporter 11 (NAT11).